Reading from the N-terminus, the 98-residue chain is Large ribosomal subunit protein uL23 (98 aa).

The protein belongs to the universal ribosomal protein uL23 family. In terms of assembly, part of the 50S ribosomal subunit. Contacts protein L29, and trigger factor when it is bound to the ribosome.

One of the early assembly proteins it binds 23S rRNA. One of the proteins that surrounds the polypeptide exit tunnel on the outside of the ribosome. Forms the main docking site for trigger factor binding to the ribosome. The sequence is that of Large ribosomal subunit protein uL23 from Nitrobacter winogradskyi (strain ATCC 25391 / DSM 10237 / CIP 104748 / NCIMB 11846 / Nb-255).